The primary structure comprises 229 residues: Adapter protein MecA (229 aa).

The protein belongs to the MecA family. Homodimer.

Enables the recognition and targeting of unfolded and aggregated proteins to the ClpC protease or to other proteins involved in proteolysis. The chain is Adapter protein MecA from Latilactobacillus sakei subsp. sakei (strain 23K) (Lactobacillus sakei subsp. sakei).